The sequence spans 206 residues: Large ribosomal subunit protein uL4 (206 aa).

Residues 42–54 (RRQQGTHQSQGRS) are compositionally biased toward polar residues. Positions 42–93 (RRQQGTHQSQGRSDVSRTGAKMFKQKGTGRARHSSARAPQFRGGGKAHGPVV) are disordered. Positions 64–76 (FKQKGTGRARHSS) are enriched in basic residues.

It belongs to the universal ribosomal protein uL4 family. In terms of assembly, part of the 50S ribosomal subunit.

In terms of biological role, one of the primary rRNA binding proteins, this protein initially binds near the 5'-end of the 23S rRNA. It is important during the early stages of 50S assembly. It makes multiple contacts with different domains of the 23S rRNA in the assembled 50S subunit and ribosome. Its function is as follows. Forms part of the polypeptide exit tunnel. The chain is Large ribosomal subunit protein uL4 from Bartonella henselae (strain ATCC 49882 / DSM 28221 / CCUG 30454 / Houston 1) (Rochalimaea henselae).